A 181-amino-acid chain; its full sequence is Acireductone dioxygenase (181 aa).

Fe(2+) is bound by residues histidine 98, histidine 100, glutamate 104, and histidine 142. The Ni(2+) site is built by histidine 98, histidine 100, glutamate 104, and histidine 142.

This sequence belongs to the acireductone dioxygenase (ARD) family. As to quaternary structure, monomer. Fe(2+) serves as cofactor. It depends on Ni(2+) as a cofactor.

It catalyses the reaction 1,2-dihydroxy-5-(methylsulfanyl)pent-1-en-3-one + O2 = 3-(methylsulfanyl)propanoate + CO + formate + 2 H(+). The catalysed reaction is 1,2-dihydroxy-5-(methylsulfanyl)pent-1-en-3-one + O2 = 4-methylsulfanyl-2-oxobutanoate + formate + 2 H(+). It participates in amino-acid biosynthesis; L-methionine biosynthesis via salvage pathway; L-methionine from S-methyl-5-thio-alpha-D-ribose 1-phosphate: step 5/6. Its function is as follows. Catalyzes 2 different reactions between oxygen and the acireductone 1,2-dihydroxy-3-keto-5-methylthiopentene (DHK-MTPene) depending upon the metal bound in the active site. Fe-containing acireductone dioxygenase (Fe-ARD) produces formate and 2-keto-4-methylthiobutyrate (KMTB), the alpha-ketoacid precursor of methionine in the methionine recycle pathway. Ni-containing acireductone dioxygenase (Ni-ARD) produces methylthiopropionate, carbon monoxide and formate, and does not lie on the methionine recycle pathway. In Alcanivorax borkumensis (strain ATCC 700651 / DSM 11573 / NCIMB 13689 / SK2), this protein is Acireductone dioxygenase.